A 162-amino-acid polypeptide reads, in one-letter code: UPF0178 protein Rsph17029_2512 (162 aa).

This sequence belongs to the UPF0178 family.

This is UPF0178 protein Rsph17029_2512 from Cereibacter sphaeroides (strain ATCC 17029 / ATH 2.4.9) (Rhodobacter sphaeroides).